A 165-amino-acid chain; its full sequence is Nucleotide-binding protein PMN2A_1813 (165 aa).

Belongs to the YajQ family.

Its function is as follows. Nucleotide-binding protein. This chain is Nucleotide-binding protein PMN2A_1813, found in Prochlorococcus marinus (strain NATL2A).